A 66-amino-acid chain; its full sequence is Xenoxin-3 (66 aa).

Intrachain disulfides connect Cys3–Cys24, Cys17–Cys37, Cys43–Cys58, and Cys59–Cys64.

As to expression, expressed by the skin dorsal glands.

Its subcellular location is the secreted. Functionally, lacks alpha-neurotoxic activity, has apparently no antibacterial activity, nor anti-coagulant potency. This chain is Xenoxin-3, found in Xenopus laevis (African clawed frog).